A 632-amino-acid polypeptide reads, in one-letter code: Phosphoglucomutase, chloroplastic (632 aa).

The N-terminal 72 residues, 1-72 (MAMESALTST…PSSPSTSVAQ (72 aa)), are a transit peptide targeting the chloroplast. Alpha-D-glucose 1,6-bisphosphate-binding residues include arginine 97 and serine 190. Serine 190 (phosphoserine intermediate) is an active-site residue. Residues serine 190, aspartate 355, aspartate 357, and aspartate 359 each contribute to the Mg(2+) site. Serine 190 is subject to Phosphoserine. Alpha-D-glucose 1,6-bisphosphate contacts are provided by aspartate 359, arginine 360, threonine 423, glutamate 442, serine 444, and lysine 455.

Belongs to the phosphohexose mutase family. Monomer. Mg(2+) serves as cofactor.

The protein localises to the plastid. The protein resides in the chloroplast. The catalysed reaction is alpha-D-glucose 1-phosphate = alpha-D-glucose 6-phosphate. It carries out the reaction O-phospho-L-seryl-[protein] + alpha-D-glucose 1-phosphate = alpha-D-glucose 1,6-bisphosphate + L-seryl-[protein]. It catalyses the reaction alpha-D-glucose 1,6-bisphosphate + L-seryl-[protein] = O-phospho-L-seryl-[protein] + alpha-D-glucose 6-phosphate. Inhibited by the Calvin cycle intermediates fructose-1,6-bisphosphate and ribulose-1,5-bisphosphate. Catalyzes the reversible isomerization of alpha-D-glucose 1-phosphate to alpha-D-glucose 6-phosphate. The mechanism proceeds via the intermediate compound alpha-D-glucose 1,6-bisphosphate. This enzyme participates in both the breakdown and synthesis of glucose. Promotes gravitropic responses, negative in shoots but positive in roots, by facilitating starch granules (statoliths) formation. The chain is Phosphoglucomutase, chloroplastic (PGMP) from Solanum tuberosum (Potato).